The sequence spans 385 residues: DNA replication and repair protein RecF (385 aa).

30–37 serves as a coordination point for ATP; the sequence is GPNGYGKT.

This sequence belongs to the RecF family.

The protein resides in the cytoplasm. In terms of biological role, the RecF protein is involved in DNA metabolism; it is required for DNA replication and normal SOS inducibility. RecF binds preferentially to single-stranded, linear DNA. It also seems to bind ATP. The polypeptide is DNA replication and repair protein RecF (Mycobacterium tuberculosis (strain ATCC 25177 / H37Ra)).